The primary structure comprises 715 residues: Methylmalonyl-CoA mutase large subunit (715 aa).

(R)-methylmalonyl-CoA is bound by residues Tyr-70, Met-73, Arg-77, Thr-80, Arg-82, Tyr-84, and Ser-109. 2 residues coordinate cob(II)alamin: Phe-112 and Ala-134. Thr-190 and Gln-192 together coordinate (R)-methylmalonyl-CoA. The cob(II)alamin site is built by Val-201 and Arg-202. (R)-methylmalonyl-CoA-binding residues include Arg-202, His-239, Arg-278, and Ser-280. 11 residues coordinate cob(II)alamin: Gly-328, Glu-365, Ala-368, Gly-599, His-600, Asp-601, Arg-602, Ser-645, Leu-647, Gly-676, and Thr-699. The region spanning 587–715 is the B12-binding domain; it reads QPRIMIAKMG…AKVLEILLEE (129 aa).

This sequence belongs to the methylmalonyl-CoA mutase family. As to quaternary structure, heterodimer of an alpha and a beta chain. Adenosylcob(III)alamin serves as cofactor.

The enzyme catalyses (R)-methylmalonyl-CoA = succinyl-CoA. Catalyzes the isomerization of succinyl-CoA to methylmalonyl-CoA during synthesis of propionate from tricarboxylic acid-cycle intermediates. This Porphyromonas gingivalis (strain ATCC BAA-308 / W83) protein is Methylmalonyl-CoA mutase large subunit (mutB).